We begin with the raw amino-acid sequence, 243 residues long: ATP synthase subunit b, mitochondrial (243 aa).

It belongs to the eukaryotic ATPase B chain family. As to quaternary structure, F-type ATPases have 2 components, CF(1) - the catalytic core - and CF(0) - the membrane proton channel. CF(1) has five subunits: alpha(3), beta(3), gamma(1), delta(1), epsilon(1). CF(0) has three main subunits: a, b and c.

It localises to the mitochondrion. It is found in the mitochondrion inner membrane. Its function is as follows. Mitochondrial membrane ATP synthase (F(1)F(0) ATP synthase or Complex V) produces ATP from ADP in the presence of a proton gradient across the membrane which is generated by electron transport complexes of the respiratory chain. F-type ATPases consist of two structural domains, F(1) - containing the extramembraneous catalytic core, and F(0) - containing the membrane proton channel, linked together by a central stalk and a peripheral stalk. During catalysis, ATP synthesis in the catalytic domain of F(1) is coupled via a rotary mechanism of the central stalk subunits to proton translocation. Part of the complex F(0) domain and the peripheric stalk, which acts as a stator to hold the catalytic alpha(3)beta(3) subcomplex and subunit a/ATP6 static relative to the rotary elements. The sequence is that of ATP synthase subunit b, mitochondrial from Drosophila melanogaster (Fruit fly).